A 224-amino-acid chain; its full sequence is Protein GrpE (224 aa).

Residues 1–72 are disordered; it reads MEKERDVAQE…KAKEEQNEEL (72 aa). Over residues 10 to 19 the composition is skewed to polar residues; it reads EQATYEQESP. The segment covering 20 to 67 has biased composition (basic and acidic residues); it reads NAERQEELKENEHQEKNAPEEQEKVREENGRQDAQKDEIGDPEKAKEE.

This sequence belongs to the GrpE family. In terms of assembly, homodimer.

It localises to the cytoplasm. In terms of biological role, participates actively in the response to hyperosmotic and heat shock by preventing the aggregation of stress-denatured proteins, in association with DnaK and GrpE. It is the nucleotide exchange factor for DnaK and may function as a thermosensor. Unfolded proteins bind initially to DnaJ; upon interaction with the DnaJ-bound protein, DnaK hydrolyzes its bound ATP, resulting in the formation of a stable complex. GrpE releases ADP from DnaK; ATP binding to DnaK triggers the release of the substrate protein, thus completing the reaction cycle. Several rounds of ATP-dependent interactions between DnaJ, DnaK and GrpE are required for fully efficient folding. The protein is Protein GrpE of Parageobacillus thermoglucosidasius (Geobacillus thermoglucosidasius).